The chain runs to 33 residues: Alpha-amanitin proprotein (33 aa).

Positions 1–10 (MSDINATRLP) are excised as a propeptide. Ile-11 carries the (3R,4R)-4,5-dihydroxyisoleucine; in form alpha-amanitin modification. (3R,4S)-4-hydroxyisoleucine; in form gamma-amanitin is present on Ile-11. Residues 11–18 (IWGIGCNP) constitute a cross-link (cyclopeptide (Ile-Pro)). Residues 12–16 (WGIGC) constitute a cross-link (2'-cysteinyl-6'-hydroxytryptophan sulfoxide (Trp-Cys)). Pro-18 is subject to 4-hydroxyproline. The propeptide occupies 19–33 (CVGDEVTALLTRGEA).

Belongs to the MSDIN fungal toxin family. Processed by the macrocyclase-peptidase enzyme POPB to yield a toxic cyclic decapeptide. POPB first removes 10 residues from the N-terminus. Conformational trapping of the remaining peptide forces the enzyme to release this intermediate rather than proceed to macrocyclization. The enzyme rebinds the remaining peptide in a different conformation and catalyzes macrocyclization of the N-terminal 8 residues.

Major toxin belonging to the bicyclic octapeptides amatoxins that acts by binding non-competitively to RNA polymerase II and greatly slowing the elongation of transcripts from target promoters. This chain is Alpha-amanitin proprotein, found in Amanita fuligineoides.